Here is a 107-residue protein sequence, read N- to C-terminus: Small leucine-rich protein 1 (107 aa).

Transmembrane regions (helical) follow at residues 19–39 and 53–73; these read AALV…LAMS and FLFF…IAYF. A disordered region spans residues 85-107; the sequence is SQNCDRQHNPKDGSSLYQRMKWT.

Its subcellular location is the membrane. The protein is Small leucine-rich protein 1 (SMLR1) of Homo sapiens (Human).